A 367-amino-acid chain; its full sequence is Peroxidase 1 (367 aa).

An N-terminal signal peptide occupies residues 1 to 33 (MAKESKLTAGVAAALTVVAACALCLLLPATARA). Position 34 is a pyrrolidone carboxylic acid (Q34). 4 disulfides stabilise this stretch: C44–C125, C77–C82, C131–C335, and C209–C244. Residue H75 is the Proton acceptor of the active site. 5 residues coordinate Ca(2+): D76, V79, G81, D83, and S85. A glycan (N-linked (GlcNAc...) asparagine) is linked at N164. P172 lines the substrate pocket. A heme b-binding site is contributed by H202. Position 203 (T203) interacts with Ca(2+). N-linked (GlcNAc...) asparagine glycans are attached at residues N218 and N247. Residues D259, T262, and D267 each coordinate Ca(2+). N303 carries N-linked (GlcNAc...) asparagine glycosylation.

It belongs to the peroxidase family. Classical plant (class III) peroxidase subfamily. It depends on heme b as a cofactor. Requires Ca(2+) as cofactor. In terms of tissue distribution, expressed in the root tip meristems.

The protein resides in the secreted. The protein localises to the vacuole. It catalyses the reaction 2 a phenolic donor + H2O2 = 2 a phenolic radical donor + 2 H2O. Removal of H(2)O(2), oxidation of toxic reductants, biosynthesis and degradation of lignin, suberization, auxin catabolism, response to environmental stresses such as wounding, pathogen attack and oxidative stress. These functions might be dependent on each isozyme/isoform in each plant tissue. The protein is Peroxidase 1 (PER1) of Zea mays (Maize).